A 174-amino-acid chain; its full sequence is MSRVAKQPVPLPKGVEVHVADQRLVVKGPKGEMSVPFHPAVELRIDDGGASLTWSDNQNAQAGTMRAILNNMVQGVSQGYEQKLEIIGVGYRAQAKGKTLSLSLGFSHPVDYSVPDDITIETPTQTEIVIRGIDKQKIGQIAADIRAYRPPEPYKGKGVRYAGENVRRKEAKKK.

This sequence belongs to the universal ribosomal protein uL6 family. Part of the 50S ribosomal subunit.

Its function is as follows. This protein binds to the 23S rRNA, and is important in its secondary structure. It is located near the subunit interface in the base of the L7/L12 stalk, and near the tRNA binding site of the peptidyltransferase center. The protein is Large ribosomal subunit protein uL6 of Acidithiobacillus ferrooxidans (strain ATCC 23270 / DSM 14882 / CIP 104768 / NCIMB 8455) (Ferrobacillus ferrooxidans (strain ATCC 23270)).